A 311-amino-acid polypeptide reads, in one-letter code: MAGGVSLKYILEQLAEERLGFLVNGHAMRQESQVGDLKVMERKKKLLEKRKVDIIKAKAKAVINHVRVEDDGTTCLSYTIHYEYVCKEQDDSLYIEEHIEERMAFLYDHILISDQEIAKKPAGFHEGTSIIDYSEAEEEREAFGRAFQYDRLGAVQYAEKFWNKRNPAYKNFSDNCTNFISQCLHAGGAPMRGHPNRGSGWWMKQSSWSYSWTVAHSMKMYLSNSKAGLRAVRVKSAEELMPGDVICYDFEGDGRFNHTTIVVAKDKGNMPLVNAQTYDSRMRYWSYEDSTAYTPSIRYAFFHIVDDTTKE.

This is an uncharacterized protein from Bacillus subtilis (strain 168).